The sequence spans 517 residues: MLPKVESEYLGLARSHGEQGHMPGNMQAPQFKMMDYSYDEDLDEMCPVCGDKVSGYHYGLLTCESCKGFFKRTVQNNKRYTCIENQSCQIDKTQRKRCPYCRFQKCLTVGMKLEAVRADRMRGGRNKFGPMYKRDRALKQQKKALIRANGLKLEAMTQVMQTVPADLTITSAIQNIHSASKGLPLSHHHHHHHHHHHHSSSSAGLPPADFDRSPFVTSPVSMAMPPHAGGLQGYQAYGHFQSRTIKSEYPDPYTSSPESLMGYPYVEAYAGGSPPSFPHLVVELLKCEPDEPQVQAKILAYLQQEQASRGKHEKLNTFGLMCKMADQTLFSIVEWARSSIFFRELKVDDQMKLLQNCWSELLILDHVFRQVMHAKEGSILLVTGQQVDYALIASQAGATLNNLLSHAQELVSKLRSLQLDQREFVCLKFLVLFSLDVKNLENFHLVESVQEQVNAALLDYVMCNYPQQTDKFGQLLLRLPEIRAISLQAEEYLYYKHLNGDVPCNNLLIEMLHAKRA.

Residues 43-118 (DEMCPVCGDK…VGMKLEAVRA (76 aa)) constitute a DNA-binding region (nuclear receptor). Residues Cys-46, Cys-49, Cys-63, Cys-66, Cys-82, Cys-88, Cys-98, and Cys-101 each contribute to the Zn(2+) site. NR C4-type zinc fingers lie at residues 46–66 (CPVCGDKVSGYHYGLLTCESC) and 82–101 (CIENQSCQIDKTQRKRCPYC). Residues 112–127 (KLEAVRADRMRGGRNK) form a C-terminal extension (CTE) region. Residues 128–147 (FGPMYKRDRALKQQKKALIR) carry the FTZ-F1 box motif. The segment at 182 to 211 (GLPLSHHHHHHHHHHHHSSSSAGLPPADFD) is disordered. Residues 186 to 199 (SHHHHHHHHHHHHS) show a composition bias toward basic residues. Positions 276 to 515 (SFPHLVVELL…NLLIEMLHAK (240 aa)) constitute an NR LBD domain. A phospholipid derivative is bound by residues 397-400 (GATL), Tyr-492, and Lys-496. An AF-2 region spans residues 504-515 (CNNLLIEMLHAK).

Belongs to the nuclear hormone receptor family. NR5 subfamily. As to quaternary structure, monomer; Binds DNA as a monomer.

It localises to the nucleus. The protein resides in the chromosome. In terms of biological role, orphan nuclear receptor that binds DNA as a monomer to the 5'-TCAAGGCCA-3' sequence and controls expression of target genes: regulates key biological processes, such as cholesterol and bile acid synthesis pathways, as well as cartilage, liver and pancreas morphogenesis. Ligand-binding causes conformational change which causes recruitment of coactivators, promoting target gene activation. The specific ligand is unknown, but specific phospholipids, such as phosphatidylethanolamine, phosphatidylserine, dilauroyl phosphatidylcholine and diundecanoyl phosphatidylcholine can act as ligand in vitro. Acts as a pioneer transcription factor, which unwraps target DNA from histones and elicits local opening of closed chromatin. Involved in the formation of connective tissue in lower jaw. Functionally, lacks transcription factor activity; unable to activate expression of target genes. This Danio rerio (Zebrafish) protein is Nuclear receptor subfamily 5 group A member 2.